A 428-amino-acid polypeptide reads, in one-letter code: Dihydroorotase (428 aa).

Residues His60 and His62 each coordinate Zn(2+). Substrate is bound by residues 62–64 and Asn94; that span reads HLR. Positions 152, 179, and 232 each coordinate Zn(2+). Substrate is bound at residue Asn278. Asp305 provides a ligand contact to Zn(2+). Asp305 is an active-site residue. Residues His309 and 323–324 contribute to the substrate site; that span reads FG.

Belongs to the metallo-dependent hydrolases superfamily. DHOase family. Class I DHOase subfamily. Requires Zn(2+) as cofactor.

It catalyses the reaction (S)-dihydroorotate + H2O = N-carbamoyl-L-aspartate + H(+). It participates in pyrimidine metabolism; UMP biosynthesis via de novo pathway; (S)-dihydroorotate from bicarbonate: step 3/3. Its function is as follows. Catalyzes the reversible cyclization of carbamoyl aspartate to dihydroorotate. The polypeptide is Dihydroorotase (Anoxybacillus flavithermus (strain DSM 21510 / WK1)).